Reading from the N-terminus, the 134-residue chain is Ribonuclease VapC2 (134 aa).

Positions 3 to 124 constitute a PINc domain; it reads YMLDTNICVY…TNNIKEFKRI (122 aa). Asp-6 serves as a coordination point for Mg(2+).

This sequence belongs to the PINc/VapC protein family. In terms of assembly, forms complexes with VapB2; probably VapC2(4):VapB2(2) in the absence of DNA, and VapC2(4):VapB2(4) in the presence of DNA. Crystallizes as heterodimers with stoichiometry VapC2(4):VapB2(4) in the presence of its probable promoter DNA. The heterodimers are in contact via alternative VapC-VapC and VapB-VapB interactions. This subunit does not contact DNA. The cofactor is Mg(2+).

Functionally, toxic component of a type II toxin-antitoxin (TA) system. Has ssRNase activity. Upon expression in E.coli or S.cerevisiae inhibits growth in liquid culture; in S.cerevisiae its expression leads to apoptosis-like characteristics. Rapidly induces apoptosis (within 2 hours) upon microinjection into mouse fibroblasts (L929 line); pretreatment of cells with dexamethasone protects them. Probably contributes to host cell death if bacterial cell lysis occurs during host infection. Its toxic effect is neutralized by coexpression with cognate antitoxin VapB2, its RNase activity is partially inhibited in vitro by VapB2. This chain is Ribonuclease VapC2, found in Rickettsia felis (strain ATCC VR-1525 / URRWXCal2) (Rickettsia azadi).